The chain runs to 378 residues: Erythronate-4-phosphate dehydrogenase (378 aa).

S45 and T66 together coordinate substrate. NAD(+) is bound by residues D146 and T175. R208 is a catalytic residue. Position 232 (D232) interacts with NAD(+). The active site involves E237. Residue H254 is the Proton donor of the active site. Position 257 (G257) interacts with NAD(+). Residue Y258 coordinates substrate.

It belongs to the D-isomer specific 2-hydroxyacid dehydrogenase family. PdxB subfamily. In terms of assembly, homodimer.

It localises to the cytoplasm. The enzyme catalyses 4-phospho-D-erythronate + NAD(+) = (R)-3-hydroxy-2-oxo-4-phosphooxybutanoate + NADH + H(+). The protein operates within cofactor biosynthesis; pyridoxine 5'-phosphate biosynthesis; pyridoxine 5'-phosphate from D-erythrose 4-phosphate: step 2/5. Catalyzes the oxidation of erythronate-4-phosphate to 3-hydroxy-2-oxo-4-phosphonooxybutanoate. This Salmonella paratyphi A (strain ATCC 9150 / SARB42) protein is Erythronate-4-phosphate dehydrogenase.